We begin with the raw amino-acid sequence, 221 residues long: Iron-sulfur cluster assembly SufBD family protein ycf24 (221 aa).

Belongs to the iron-sulfur cluster assembly SufBD family.

The protein localises to the plastid. It localises to the chloroplast. The protein is Iron-sulfur cluster assembly SufBD family protein ycf24 (ycf24) of Galdieria sulphuraria (Red alga).